A 1088-amino-acid chain; its full sequence is RNA-directed RNA polymerase (1088 aa).

The region spanning 501-687 (LSYGDVTRFL…AKRYIAGGKI (187 aa)) is the RdRp catalytic domain.

Belongs to the reoviridae RNA-directed RNA polymerase family. Interacts with VP3 (Potential). Interacts with VP2; this interaction activates VP1. Interacts with NSP5; this interaction is probably necessary for the formation of functional virus factories. Interacts with NSP2; this interaction is weak. Requires Mg(2+) as cofactor.

It localises to the virion. It carries out the reaction RNA(n) + a ribonucleoside 5'-triphosphate = RNA(n+1) + diphosphate. Its function is as follows. RNA-directed RNA polymerase that is involved in both transcription and genome replication. Together with VP3 capping enzyme, forms an enzyme complex positioned near the channels situated at each of the five-fold vertices of the core. Following infection, the outermost layer of the virus is lost, leaving a double-layered particle (DLP) made up of the core and VP6 shell. VP1 then catalyzes the transcription of fully conservative plus-strand genomic RNAs that are extruded through the DLP's channels into the cytoplasm where they function as mRNAs for translation of viral proteins. One copy of each of the viral (+)RNAs is also recruited during core assembly, together with newly synthesized polymerase complexes and VP2. The polymerase of these novo-formed particles catalyzes the synthesis of complementary minus-strands leading to dsRNA formation. To do so, the polymerase specifically recognizes and binds 4 bases 5'-UGUG-3' in the conserved 3'-sequence of plus-strand RNA templates. VP2 presumably activates the autoinhibited VP1-RNA complex to coordinate packaging and genome replication. Once dsRNA synthesis is complete, the polymerase switches to the transcriptional mode, thus providing secondary transcription. The sequence is that of RNA-directed RNA polymerase from Rotavirus A (strain RVA/SA11-Patton/G3P[X]) (RV-A).